The sequence spans 846 residues: Arsenate respiratory reductase molybdopterin-containing subunit ArrA (846 aa).

A signal peptide (tat-type signal) is located at residues 1-29 (MRIKRREFLKASAAVGAVAVASPTLNAFA). Positions 43-99 (GKWIPSTCQGCTTWCPVEFLFRMAVRSKYAATQLSKANNGYCCVRGHLMLQQLYDPD) constitute a 4Fe-4S Mo/W bis-MGD-type domain. [4Fe-4S] cluster contacts are provided by Cys50, Cys53, Cys57, and Cys85. Arg155 contacts arsenite. Tyr156 contacts arsenate. His179 is a binding site for arsenite. Arsenate is bound at residue Ser180. Mo-bis(molybdopterin guanine dinucleotide) is bound at residue Cys183. Lys188 contributes to the arsenate binding site. Position 200 (Tyr200) interacts with arsenite.

This sequence belongs to the prokaryotic molybdopterin-containing oxidoreductase family. As to quaternary structure, heterodimer composed of one large subunit (ArrA) and one small subunit (ArrB). [4Fe-4S] cluster serves as cofactor. The cofactor is Mo-bis(molybdopterin guanine dinucleotide). In terms of processing, predicted to be exported by the Tat system. The position of the signal peptide cleavage has been experimentally proven.

The protein resides in the periplasm. It catalyses the reaction arsenite + A + H2O = arsenate + AH2 + H(+). In terms of biological role, component of the arsenate respiratory reductase (Arr) complex, which catalyzes the reduction of arsenate (As(V)) to arsenite (As(III)). Can use acetate as the electron donor. ArrA is the arsenate-binding subunit. This Chrysiogenes arsenatis protein is Arsenate respiratory reductase molybdopterin-containing subunit ArrA.